The sequence spans 1377 residues: Dicer-like protein 2 (1377 aa).

Positions 23-203 (MFEASLKENI…MKTLESNLDS (181 aa)) constitute a Helicase ATP-binding domain. Residue 36-43 (MDTGTGKT) coordinates ATP. Positions 144-147 (DEAH) match the DEAH box motif. A Helicase C-terminal domain is found at 368-531 (ALINFLDKFD…AYQDEERRLR (164 aa)). One can recognise a Dicer dsRNA-binding fold domain in the interval 561-655 (VVTHLYHFCA…LPLTKNPEMR (95 aa)). 2 RNase III domains span residues 914–1052 (RLCA…LDGG) and 1092–1275 (DGDL…VDSG). 3 residues coordinate Mg(2+): glutamate 1131, aspartate 1261, and glutamate 1264.

The protein belongs to the helicase family. Dicer subfamily. Mg(2+) is required as a cofactor. Requires Mn(2+) as cofactor.

In terms of biological role, dicer-like endonuclease involved in cleaving double-stranded RNA in the RNA interference (RNAi) pathway. Produces 21 to 25 bp dsRNAs (siRNAs) which target the selective destruction of homologous RNAs leading to sequence-specific suppression of gene expression, called post-transcriptional gene silencing (PTGS). Part of a broad host defense response against viral infection and transposons. The chain is Dicer-like protein 2 (dcl2) from Aspergillus oryzae (strain ATCC 42149 / RIB 40) (Yellow koji mold).